The sequence spans 484 residues: Probable UDP-N-acetylglucosamine pyrophosphorylase (484 aa).

Positions leucine 107–glycine 110 match the Substrate binding motif. UTP-binding positions include leucine 107 to glycine 110, lysine 121, glutamine 200, and glycine 226. Asparagine 227 serves as a coordination point for substrate. Aspartate 255 provides a ligand contact to UTP. The short motif at glutamate 304–tyrosine 305 is the Substrate binding element. Lysine 377 contributes to the UTP binding site. Lysine 407 contributes to the substrate binding site.

It belongs to the UDPGP type 1 family.

The protein resides in the cytoplasm. It catalyses the reaction N-acetyl-alpha-D-glucosamine 1-phosphate + UTP + H(+) = UDP-N-acetyl-alpha-D-glucosamine + diphosphate. Its pathway is nucleotide-sugar biosynthesis; UDP-N-acetyl-alpha-D-glucosamine biosynthesis; UDP-N-acetyl-alpha-D-glucosamine from N-acetyl-alpha-D-glucosamine 1-phosphate: step 1/1. The polypeptide is Probable UDP-N-acetylglucosamine pyrophosphorylase (Caenorhabditis elegans).